Consider the following 23-residue polypeptide: Chaperonin GroEL (23 aa).

The protein belongs to the chaperonin (HSP60) family. Forms a cylinder of 14 subunits composed of two heptameric rings stacked back-to-back. Interacts with the co-chaperonin GroES. In terms of processing, phosphorylated on threonine.

It localises to the cytoplasm. The catalysed reaction is ATP + H2O + a folded polypeptide = ADP + phosphate + an unfolded polypeptide.. Its function is as follows. Together with its co-chaperonin GroES, plays an essential role in assisting protein folding. The GroEL-GroES system forms a nano-cage that allows encapsulation of the non-native substrate proteins and provides a physical environment optimized to promote and accelerate protein folding. The chain is Chaperonin GroEL from Acidithiobacillus ferrooxidans (Thiobacillus ferrooxidans).